The sequence spans 22 residues: 50 kDa cell wall protein (22 aa).

It is found in the secreted. The protein localises to the cell wall. The protein is 50 kDa cell wall protein of Nicotiana tabacum (Common tobacco).